The primary structure comprises 152 residues: Succinate dehydrogenase [ubiquinone] cytochrome b small subunit, mitochondrial (152 aa).

The transit peptide at 1–21 (MATLLRVSSLCRANRASAFKS) directs the protein to the mitochondrion. Topologically, residues 22–56 (LLIRPVPCLTQDHHMVQTSQIHTSPNHHAGSKAAS) are mitochondrial matrix. The helical transmembrane segment at 57–78 (MHWTSERALSVALLGLLPAAYL) threads the bilayer. Over 79–83 (YPGAA) the chain is Mitochondrial intermembrane. A helical transmembrane segment spans residues 84 to 104 (MDYSLAAALTLHGHWGLGQVV). His95 contacts heme b. Residues 105–113 (TDYVHGDAK) lie on the Mitochondrial matrix side of the membrane. Position 107 (Tyr107) interacts with a ubiquinone. A helical transmembrane segment spans residues 114–135 (IKMANTSLFALSALTFAGLCYF). Over 136–152 (NYHDVGICKAVSMLWSL) the chain is Mitochondrial intermembrane.

This sequence belongs to the CybS family. Component of complex II composed of four subunits: the flavoprotein (FP) SDHA, iron-sulfur protein (IP) SDHB, and a cytochrome b560 composed of SDHC and SDHD.

The protein localises to the mitochondrion inner membrane. It functions in the pathway carbohydrate metabolism; tricarboxylic acid cycle. Its function is as follows. Membrane-anchoring subunit of succinate dehydrogenase (SDH) that is involved in complex II of the mitochondrial electron transport chain and is responsible for transferring electrons from succinate to ubiquinone (coenzyme Q). SDH also oxidizes malate to the non-canonical enol form of oxaloacetate, enol-oxaloacetate. Enol-oxaloacetate, which is a potent inhibitor of the succinate dehydrogenase activity, is further isomerized into keto-oxaloacetate. This is Succinate dehydrogenase [ubiquinone] cytochrome b small subunit, mitochondrial (sdhd) from Xenopus tropicalis (Western clawed frog).